The sequence spans 373 residues: DNA replication and repair protein RecF (373 aa).

30-37 (GENAQGKT) serves as a coordination point for ATP.

The protein belongs to the RecF family.

Its subcellular location is the cytoplasm. In terms of biological role, the RecF protein is involved in DNA metabolism; it is required for DNA replication and normal SOS inducibility. RecF binds preferentially to single-stranded, linear DNA. It also seems to bind ATP. The protein is DNA replication and repair protein RecF of Bacillus cytotoxicus (strain DSM 22905 / CIP 110041 / 391-98 / NVH 391-98).